The chain runs to 295 residues: MSGIISVMTQSLILSIMALGVYITYKILDFPDMSADGSYTMGASIVAFSLTNGISPVVATLMAILCGCTAGLVTGILHIKFKISNLLSGILVMGMLYSINLRIMGKSNIPLFSFKHLFNGEISPIVLALAFVFICKILLDLFLKTGLGYTLKGVGDNSQMIKSLGINIGSIKILGLMISNGLIALSGSLMAQFLGFSDVNMGIGTLVLGIASIIIGITLFKKFTFIKDTTAIIVGSFIYQFTIYFAMSLGMLSTDLKLITAIVIIAFLATGNLNISLKKTNAKLVPKINQKKEVL.

8 consecutive transmembrane segments (helical) span residues 3 to 23, 57 to 77, 81 to 101, 122 to 142, 173 to 193, 200 to 220, 232 to 252, and 256 to 276; these read GIIS…GVYI, VVAT…TGIL, FKIS…SINL, ISPI…LDLF, ILGL…MAQF, NMGI…ITLF, IIVG…LGML, and LKLI…LNIS.

It belongs to the binding-protein-dependent transport system permease family. The complex is probably composed of two ATP-binding proteins (CDR20291_0806), two transmembrane proteins (CDR20291_0807) and a solute-binding protein (CDR20291_0805).

Its subcellular location is the cell membrane. Its function is as follows. Probably part of an ABC transporter complex involved in tyrosine uptake. May also import phenylalanine. Probably responsible for the translocation of the substrate across the membrane. This is Tyrosine transport system permease protein from Clostridioides difficile (strain R20291) (Peptoclostridium difficile).